Here is a 433-residue protein sequence, read N- to C-terminus: Acetyl-CoA acetyltransferase erg10A, mitochondrial (433 aa).

The N-terminal 34 residues, 1–34 (MAIQTTTGLAARLVAKRATFPASRRNFSASRSAL), are a transit peptide targeting the mitochondrion. C124 (acyl-thioester intermediate) is an active-site residue. Y219 lines the K(+) pocket. Positions 229 and 262 each coordinate CoA. A280 contributes to the K(+) binding site. S284 is a CoA binding site. Active-site proton acceptor residues include H387 and C415. N416 is a chloride binding site.

This sequence belongs to the thiolase-like superfamily. Thiolase family. As to quaternary structure, homotetramer. Requires K(+) as cofactor.

The protein localises to the mitochondrion. It catalyses the reaction 2 acetyl-CoA = acetoacetyl-CoA + CoA. The protein operates within metabolic intermediate biosynthesis; (R)-mevalonate biosynthesis; (R)-mevalonate from acetyl-CoA: step 1/3. Functionally, mitochondrial acetyl-CoA acetyltransferase that catalyzes both the formation and degradation of acetoacetyl-CoA. Has no overlapping function with erg10B and seems not to be involved in ergosterol biosynthesis. Plays an important role in growth, morphogenesis and maintaining mitochondrial function including the response to oxidative stresses. This Aspergillus fumigatus (strain ATCC MYA-4609 / CBS 101355 / FGSC A1100 / Af293) (Neosartorya fumigata) protein is Acetyl-CoA acetyltransferase erg10A, mitochondrial.